The following is a 326-amino-acid chain: Eukaryotic translation initiation factor 3 subunit I (326 aa).

WD repeat units lie at residues 8–47 (GHER…RLGT), 50–89 (GHQG…IIAS), 145–184 (MTES…KVVD), 188–227 (DHAA…CLKT), and 285–326 (GHFG…NIFE).

The protein belongs to the eIF-3 subunit I family. Component of the eukaryotic translation initiation factor 3 (eIF-3) complex. The eIF-3 complex interacts with pix.

It localises to the cytoplasm. Its function is as follows. Component of the eukaryotic translation initiation factor 3 (eIF-3) complex, which is involved in protein synthesis of a specialized repertoire of mRNAs and, together with other initiation factors, stimulates binding of mRNA and methionyl-tRNAi to the 40S ribosome. The eIF-3 complex specifically targets and initiates translation of a subset of mRNAs involved in cell proliferation. This Drosophila pseudoobscura pseudoobscura (Fruit fly) protein is Eukaryotic translation initiation factor 3 subunit I.